The sequence spans 147 residues: Small ribosomal subunit protein uS12 (147 aa).

Belongs to the universal ribosomal protein uS12 family. Part of the 30S ribosomal subunit.

In terms of biological role, with S4 and S5 plays an important role in translational accuracy. Located at the interface of the 30S and 50S subunits. The chain is Small ribosomal subunit protein uS12 from Pyrobaculum islandicum (strain DSM 4184 / JCM 9189 / GEO3).